A 321-amino-acid polypeptide reads, in one-letter code: Malate dehydrogenase (321 aa).

NAD(+) is bound by residues 10 to 15 (GSGMIG) and Asp-34. Substrate contacts are provided by Arg-83 and Arg-89. Residues Asn-96 and 119-121 (ITN) contribute to the NAD(+) site. Asn-121 and Arg-152 together coordinate substrate. His-176 functions as the Proton acceptor in the catalytic mechanism.

The protein belongs to the LDH/MDH superfamily. MDH type 3 family.

It carries out the reaction (S)-malate + NAD(+) = oxaloacetate + NADH + H(+). Its function is as follows. Catalyzes the reversible oxidation of malate to oxaloacetate. The sequence is that of Malate dehydrogenase from Sinorhizobium fredii (strain NBRC 101917 / NGR234).